Consider the following 231-residue polypeptide: Acyl-protein thioesterase 2 (231 aa).

C2 carries the S-palmitoyl cysteine lipid modification. A Phosphoserine modification is found at S82. Residues S122, D176, and H210 each act as charge relay system in the active site.

It belongs to the AB hydrolase superfamily. AB hydrolase 2 family. Ubiquitous; detected at low levels.

The protein resides in the cytoplasm. It carries out the reaction S-hexadecanoyl-L-cysteinyl-[protein] + H2O = L-cysteinyl-[protein] + hexadecanoate + H(+). The enzyme catalyses prostaglandin E2 1-glyceryl ester + H2O = prostaglandin E2 + glycerol + H(+). The catalysed reaction is 1-hexadecanoyl-sn-glycero-3-phosphocholine + H2O = sn-glycerol 3-phosphocholine + hexadecanoate + H(+). It catalyses the reaction 1-octadecanoyl-sn-glycero-3-phosphocholine + H2O = octadecanoate + sn-glycerol 3-phosphocholine + H(+). It carries out the reaction 1-hexadecanoyl-sn-glycero-3-phosphate + H2O = sn-glycerol 3-phosphate + hexadecanoate + H(+). The enzyme catalyses 1-hexadecanoyl-sn-glycero-3-phospho-L-serine + H2O = sn-glycero-3-phospho-L-serine + hexadecanoate + H(+). Functionally, acts as an acyl-protein thioesterase hydrolyzing fatty acids from S-acylated cysteine residues in proteins such as trimeric G alpha proteins, GSDMD, GAP43, ZDHHC6 or HRAS. Deacylates GAP43. Mediates depalmitoylation of ZDHHC6. Has lysophospholipase activity. Hydrolyzes prostaglandin glycerol esters (PG-Gs). Hydrolyzes PG-Gs in the following order prostaglandin D2-glycerol ester (PGD2-G) &gt; prostaglandin E2 glycerol ester (PGE2-G) &gt; prostaglandin F2-alpha-glycerol ester (PGF2-alpha-G). Hydrolyzes 1-arachidonoylglycerol but not 2-arachidonoylglycerol or arachidonoylethanolamide. This is Acyl-protein thioesterase 2 (Lypla2) from Mus musculus (Mouse).